We begin with the raw amino-acid sequence, 349 residues long: Septin-2 (349 aa).

Positions 33 to 305 (KGFEFTLMVV…ENFRSERLKR (273 aa)) constitute a Septin-type G domain. The interval 43–50 (GESGLGKS) is G1 motif. GTP contacts are provided by residues 43–50 (GESGLGKS), threonine 77, glycine 103, 182–190 (KADTLTLKE), glycine 240, and arginine 255. The tract at residues 100-103 (DTPG) is G3 motif. The interval 181–184 (AKAD) is G4 motif. The tract at residues 259-269 (WGVVEVENPEH) is important for dimerization.

The protein belongs to the TRAFAC class TrmE-Era-EngA-EngB-Septin-like GTPase superfamily. Septin GTPase family. In terms of assembly, septins polymerize into heterooligomeric protein complexes that form filaments, and associate with cellular membranes, actin filaments and microtubules. GTPase activity is required for filament formation. Can form heterooligomers with other family members and form filaments.

It localises to the cytoplasm. The protein localises to the cytoskeleton. The protein resides in the spindle. Its subcellular location is the cleavage furrow. It is found in the midbody. It localises to the cell cortex. The protein localises to the cell projection. The protein resides in the cilium membrane. Filament-forming cytoskeletal GTPase. Required for normal organization of the actin cytoskeleton. Plays a role in the biogenesis of polarized columnar-shaped epithelium by maintaining polyglutamylated microtubules, thus facilitating efficient vesicle transport, and by impeding MAP4 binding to tubulin. Required for the progression through mitosis. Forms a scaffold at the midplane of the mitotic splindle required to maintain CENPE localization at kinetochores and consequently chromosome congression. During anaphase, may be required for chromosome segregation and spindle elongation. Plays a role in ciliogenesis and collective cell movements. In cilia, required for the integrity of the diffusion barrier at the base of the primary cilium that prevents diffusion of transmembrane proteins between the cilia and plasma membranes. The protein is Septin-2 of Gallus gallus (Chicken).